A 269-amino-acid polypeptide reads, in one-letter code: tRNA-cytidine(32) 2-sulfurtransferase (269 aa).

A PP-loop motif motif is present at residues 53–58 (SGGKDS). [4Fe-4S] cluster is bound by residues Cys128, Cys131, and Cys218.

Belongs to the TtcA family. As to quaternary structure, homodimer. Mg(2+) serves as cofactor. The cofactor is [4Fe-4S] cluster.

Its subcellular location is the cytoplasm. The catalysed reaction is cytidine(32) in tRNA + S-sulfanyl-L-cysteinyl-[cysteine desulfurase] + AH2 + ATP = 2-thiocytidine(32) in tRNA + L-cysteinyl-[cysteine desulfurase] + A + AMP + diphosphate + H(+). The protein operates within tRNA modification. Its function is as follows. Catalyzes the ATP-dependent 2-thiolation of cytidine in position 32 of tRNA, to form 2-thiocytidine (s(2)C32). The sulfur atoms are provided by the cysteine/cysteine desulfurase (IscS) system. The sequence is that of tRNA-cytidine(32) 2-sulfurtransferase from Pelobacter propionicus (strain DSM 2379 / NBRC 103807 / OttBd1).